A 273-amino-acid polypeptide reads, in one-letter code: DNA repair protein RecO (273 aa).

The disordered stretch occupies residues 250–273 (NVGQNPSGKDDLNERRDVDGTGES). Basic and acidic residues predominate over residues 257 to 273 (GKDDLNERRDVDGTGES).

Belongs to the RecO family.

Involved in DNA repair and RecF pathway recombination. The sequence is that of DNA repair protein RecO from Desulfitobacterium hafniense (strain DSM 10664 / DCB-2).